The following is a 251-amino-acid chain: Small ribosomal subunit protein uS2 (251 aa).

Ser-2 carries the post-translational modification N-acetylserine. The disordered stretch occupies residues 213–251 (QVAEEATAAADEDVKEEVAEEQTEAADWAEGNTEEVASW). The span at 222–236 (ADEDVKEEVAEEQTE) shows a compositional bias: acidic residues.

This sequence belongs to the universal ribosomal protein uS2 family. Component of the small ribosomal subunit. Mature ribosomes consist of a small (40S) and a large (60S) subunit. The 40S subunit contains about 33 different proteins and 1 molecule of RNA (18S). The 60S subunit contains about 49 different proteins and 3 molecules of RNA (25S, 5.8S and 5S). Interacts with RPS21.

It localises to the cytoplasm. Its function is as follows. Required for the assembly and/or stability of the 40S ribosomal subunit. Required for the processing of the 20S rRNA-precursor to mature 18S rRNA in a late step of the maturation of 40S ribosomal subunits. This Lachancea thermotolerans (strain ATCC 56472 / CBS 6340 / NRRL Y-8284) (Yeast) protein is Small ribosomal subunit protein uS2.